A 481-amino-acid chain; its full sequence is 2-methylisoborneol synthase (481 aa).

2 disordered regions span residues 1–125 (MPDS…PVGP) and 139–160 (QAAV…GPVV). The span at 11–23 (TSLPEQPPAPPAT) shows a compositional bias: pro residues. The segment covering 24–33 (APDAPAATVT) has biased composition (low complexity). 2 stretches are compositionally biased toward pro residues: residues 52–64 (VTRP…PSMP) and 71–104 (SSPP…PPAT). The span at 105–114 (APETSAATGS) shows a compositional bias: low complexity. Mg(2+) contacts are provided by D238, D239, E243, N386, S390, and E394.

It belongs to the terpene synthase family. 2-methylisoborneol synthase subfamily. Requires Mg(2+) as cofactor.

It carries out the reaction (E)-2-methylgeranyl diphosphate + H2O = 2-methylisoborneol + diphosphate. In terms of biological role, catalyzes the cyclization of 2-methylgeranyl diphosphate (2-MeGPP) to 2-methylisoborneol (2-MIB), which likely involves the intermediacy of 2-methyllinalyl diphosphate. The protein is 2-methylisoborneol synthase (tpc) of Streptomyces lasalocidi (Streptomyces lasaliensis).